A 447-amino-acid chain; its full sequence is NADP-specific glutamate dehydrogenase (447 aa).

Residues Lys92, Gln113, and Lys116 each coordinate substrate. The active-site Proton donor is the Lys128. Residue Gly167 coordinates substrate. NADP(+) is bound by residues Thr212 and Asn243. Ser379 is a substrate binding site.

It belongs to the Glu/Leu/Phe/Val dehydrogenases family. As to quaternary structure, homohexamer.

The enzyme catalyses L-glutamate + NADP(+) + H2O = 2-oxoglutarate + NH4(+) + NADPH + H(+). In terms of biological role, catalyzes the reversible oxidative deamination of glutamate to alpha-ketoglutarate and ammonia. This Corynebacterium glutamicum (strain ATCC 13032 / DSM 20300 / JCM 1318 / BCRC 11384 / CCUG 27702 / LMG 3730 / NBRC 12168 / NCIMB 10025 / NRRL B-2784 / 534) protein is NADP-specific glutamate dehydrogenase (gdh).